Reading from the N-terminus, the 563-residue chain is Inorganic phosphate transporter PT2 (563 aa).

Disordered regions lie at residues 1-51 (MAPR…SGEE) and 67-96 (DGGA…PAYS). Over 1-127 (MAPRYHSAAE…NGEKQSLLVP (127 aa)) the chain is Extracellular. A helical transmembrane segment spans residues 128–148 (CLAVFSSNYNFTVTSIALFLM). Over 149 to 168 (NQDPLYKDASDTVVGSSTVK) the chain is Cytoplasmic. The chain crosses the membrane as a helical span at residues 169–189 (MLSYAGAIVGMCTMGYLGDLI). Over 190 to 192 (GRR) the chain is Extracellular. Residues 193–213 (LAMILTLALVFIGALLSSICA) form a helical membrane-spanning segment. The Cytoplasmic segment spans residues 214–217 (WGDG). The helical transmembrane segment at 218–238 (VTVLVIMGVCRFVLGVGSGGV) threads the bilayer. At 239 to 263 (YPLSAVSAAEGAGSEKSNDRSMRVS) the chain is on the extracellular side. A helical transmembrane segment spans residues 264–284 (WAYSMNVPGIMFPYIVALVLW). The Cytoplasmic portion of the chain corresponds to 285–291 (CTTHNVD). The helical transmembrane segment at 292-312 (VCFRILLGFGALPALLIWLPA) threads the bilayer. The Extracellular portion of the chain corresponds to 313–342 (WRMKEDRAYVAKDFAKHLAGVFVSRSYWRQ). The helical transmembrane segment at 343–363 (LLGTGVCWLLYDVTAYGILLV) threads the bilayer. The Cytoplasmic portion of the chain corresponds to 364-380 (QPEITQSIWGNSSSVTD). The helical transmembrane segment at 381–401 (VIWQNIILNGMGIPGCFMGIL) threads the bilayer. Residues 402 to 412 (VLKQMGVKWLQ) lie on the Extracellular side of the membrane. The chain crosses the membrane as a helical span at residues 413-433 (FWGFVGLAVSAFLMAATVEIL). At 434-440 (QGKAWAQ) the chain is on the cytoplasmic side. A helical transmembrane segment spans residues 441-461 (LVLLCIVNFFINWGASITTFI). Residues 462-477 (LPSLVFPPEVRSTYSG) are Extracellular-facing. A helical membrane pass occupies residues 478–498 (ISAALGKIGAVGGIYTMKAIL). Residues 499 to 504 (STGGLT) lie on the Cytoplasmic side of the membrane. Residues 505–525 (PMMICAGVPSLAAAILTWFYV) traverse the membrane as a helical segment. At 526 to 563 (DPVPNTLRSSFLQCFGSLAGSCPFIDCRKFRRGSRAFE) the chain is on the extracellular side.

Belongs to the major facilitator superfamily. Phosphate:H(+) symporter (TC 2.A.1.9) family.

The protein localises to the cell membrane. It carries out the reaction phosphate(in) = phosphate(out). In terms of biological role, inorganic phosphate transporter. Activity is likely sodium-independent. Exhibits higher activity under acidic pH, implying that either the monovalent form of phosphate is the preferred substrate or the transport activity is H(+)-dependent. The sequence is that of Inorganic phosphate transporter PT2 from Toxoplasma gondii (strain ATCC 50861 / VEG).